We begin with the raw amino-acid sequence, 377 residues long: N5-carboxyaminoimidazole ribonucleotide synthase (377 aa).

Residues R93, K133, 138–144, 175–178, E183, H206, and 257–258 each bind ATP; these read GYDGKGQ, EEFV, and NE. Residues 97-287 enclose the ATP-grasp domain; the sequence is KALLDNAGVR…QFENHLRAVC (191 aa).

The protein belongs to the PurK/PurT family. In terms of assembly, homodimer.

It carries out the reaction 5-amino-1-(5-phospho-beta-D-ribosyl)imidazole + hydrogencarbonate + ATP = 5-carboxyamino-1-(5-phospho-D-ribosyl)imidazole + ADP + phosphate + 2 H(+). It functions in the pathway purine metabolism; IMP biosynthesis via de novo pathway; 5-amino-1-(5-phospho-D-ribosyl)imidazole-4-carboxylate from 5-amino-1-(5-phospho-D-ribosyl)imidazole (N5-CAIR route): step 1/2. Catalyzes the ATP-dependent conversion of 5-aminoimidazole ribonucleotide (AIR) and HCO(3)(-) to N5-carboxyaminoimidazole ribonucleotide (N5-CAIR). The polypeptide is N5-carboxyaminoimidazole ribonucleotide synthase (Vibrio parahaemolyticus serotype O3:K6 (strain RIMD 2210633)).